We begin with the raw amino-acid sequence, 483 residues long: Altronate oxidoreductase (483 aa).

18–29 contributes to the NAD(+) binding site; that stretch reads IIQFGEGNFLRA.

It belongs to the mannitol dehydrogenase family. UxaB subfamily.

The catalysed reaction is D-altronate + NAD(+) = keto-D-tagaturonate + NADH + H(+). It functions in the pathway carbohydrate metabolism; pentose and glucuronate interconversion. This Yersinia enterocolitica serotype O:8 / biotype 1B (strain NCTC 13174 / 8081) protein is Altronate oxidoreductase.